The sequence spans 426 residues: 26S proteasome regulatory subunit 7B (426 aa).

Position 209–216 (209–216 (GPPGTGKT)) interacts with ATP.

It belongs to the AAA ATPase family.

Its subcellular location is the cytoplasm. It localises to the nucleus. The 26S proteasome is involved in the ATP-dependent degradation of ubiquitinated proteins. The regulatory (or ATPase) complex confers ATP dependency and substrate specificity to the 26S complex. The sequence is that of 26S proteasome regulatory subunit 7B (RPT1B) from Oryza sativa subsp. japonica (Rice).